The sequence spans 237 residues: tRNA1(Val) (adenine(37)-N6)-methyltransferase (237 aa).

It belongs to the methyltransferase superfamily. tRNA (adenine-N(6)-)-methyltransferase family.

The protein localises to the cytoplasm. The catalysed reaction is adenosine(37) in tRNA1(Val) + S-adenosyl-L-methionine = N(6)-methyladenosine(37) in tRNA1(Val) + S-adenosyl-L-homocysteine + H(+). In terms of biological role, specifically methylates the adenine in position 37 of tRNA(1)(Val) (anticodon cmo5UAC). In Bacteroides thetaiotaomicron (strain ATCC 29148 / DSM 2079 / JCM 5827 / CCUG 10774 / NCTC 10582 / VPI-5482 / E50), this protein is tRNA1(Val) (adenine(37)-N6)-methyltransferase.